We begin with the raw amino-acid sequence, 342 residues long: S-adenosylmethionine:tRNA ribosyltransferase-isomerase (342 aa).

The protein belongs to the QueA family. As to quaternary structure, monomer.

It localises to the cytoplasm. It catalyses the reaction 7-aminomethyl-7-carbaguanosine(34) in tRNA + S-adenosyl-L-methionine = epoxyqueuosine(34) in tRNA + adenine + L-methionine + 2 H(+). It functions in the pathway tRNA modification; tRNA-queuosine biosynthesis. In terms of biological role, transfers and isomerizes the ribose moiety from AdoMet to the 7-aminomethyl group of 7-deazaguanine (preQ1-tRNA) to give epoxyqueuosine (oQ-tRNA). The protein is S-adenosylmethionine:tRNA ribosyltransferase-isomerase of Streptococcus pneumoniae (strain ATCC BAA-255 / R6).